The chain runs to 795 residues: Protocadherin beta-12 (795 aa).

The N-terminal stretch at 1–26 (MENGGAGTLQIRQVLLFFVLLGMSQA) is a signal peptide. Over 27 to 690 (GSETGNFLVM…AQADSLTVYL (664 aa)) the chain is Extracellular. 5 consecutive Cadherin domains span residues 35 to 133 (VMEE…SPVF), 138 to 242 (MLLE…SPEF), 247 to 347 (YEVK…APEI), 352 to 451 (ITSP…APAF), and 456 to 561 (YALF…SPFV). N-linked (GlcNAc...) asparagine glycosylation is found at N418, N436, N487, and N567. Residues 568 to 671 (GSAPCTELVP…LVDGFSQPYL (104 aa)) form the Cadherin 6 domain. A helical transmembrane segment spans residues 691-711 (VVALASVSSLFLFSVLLFVAV). At 712 to 795 (RLCRRSRAAP…NPPFQNNLGF (84 aa)) the chain is on the cytoplasmic side.

Its subcellular location is the cell membrane. Its function is as follows. Potential calcium-dependent cell-adhesion protein. May be involved in the establishment and maintenance of specific neuronal connections in the brain. This Homo sapiens (Human) protein is Protocadherin beta-12 (PCDHB12).